A 52-amino-acid chain; its full sequence is Eukaryotic translation initiation factor 5A (52 aa).

Residue Lys-42 is modified to Hypusine.

Belongs to the eIF-5A family. Post-translationally, lys-42 undergoes hypusination, a unique post-translational modification that consists in the addition of a butylamino group from spermidine to lysine side chain, leading to the formation of the unusual amino acid hypusine. eIF-5As are the only known proteins to undergo this modification, which is essential for their function.

It is found in the cytoplasm. Functionally, translation factor that promotes translation elongation and termination, particularly upon ribosome stalling at specific amino acid sequence contexts. Binds between the exit (E) and peptidyl (P) site of the ribosome and promotes rescue of stalled ribosome: specifically required for efficient translation of polyproline-containing peptides as well as other motifs that stall the ribosome. Acts as a ribosome quality control (RQC) cofactor by joining the RQC complex to facilitate peptidyl transfer during CAT tailing step. In Schistosoma mansoni (Blood fluke), this protein is Eukaryotic translation initiation factor 5A.